Consider the following 334-residue polypeptide: Methionyl-tRNA formyltransferase (334 aa).

(6S)-5,6,7,8-tetrahydrofolate is bound at residue 111 to 114 (SILP).

The protein belongs to the Fmt family.

It carries out the reaction L-methionyl-tRNA(fMet) + (6R)-10-formyltetrahydrofolate = N-formyl-L-methionyl-tRNA(fMet) + (6S)-5,6,7,8-tetrahydrofolate + H(+). Functionally, attaches a formyl group to the free amino group of methionyl-tRNA(fMet). The formyl group appears to play a dual role in the initiator identity of N-formylmethionyl-tRNA by promoting its recognition by IF2 and preventing the misappropriation of this tRNA by the elongation apparatus. This chain is Methionyl-tRNA formyltransferase, found in Gloeothece citriformis (strain PCC 7424) (Cyanothece sp. (strain PCC 7424)).